A 197-amino-acid chain; its full sequence is RNA-binding protein with multiple splicing (197 aa).

Methionine 1 is modified (N-acetylmethionine). A Phosphothreonine modification is found at threonine 12. The RRM domain maps to 24-101 (RTLFVSGLPL…QTLRLEFAKA (78 aa)). Residues 98–105 (FAKANTKM) form an interaction with RNA region. Threonine 113 carries the phosphothreonine modification.

In terms of assembly, homodimer; each protein chain binds one RNA molecule via the external surface of the homodimer. Interacts with RNA binding proteins MBNL1, RBFOX2, RBM4 and RBM14; the interaction allows cooperative assembly of stable cell-specific alternative splicing regulatory complexes. Also interacts with RBM47, MATR3 and ESRP2. Interacts with SMAD2, SMAD3 and SMAD4; the interactions are direct. MRNA expressed in developing heart, with significantly higher expression in the atria relative to the ventricles.

The protein localises to the nucleus. It localises to the cytoplasm. Its subcellular location is the stress granule. It is found in the P-body. Functionally, RNA binding protein that mediates the regulation of pre-mRNA alternative splicing (AS). Acts either as activator (FLNB, HSPG2, LIPA1, MYOCD, PTPRF and PPFIBP1) or repressor (TPM1, ACTN1, ITGA7, PIEZO1, LSM14B, MBNL1 and MBML2) of splicing events on specific pre-mRNA targets. Together with RNA binding proteins RBFOX2 and MBNL1/2, activates a splicing program associated with differentiated contractile vascular smooth muscle cells (SMC) by regulating AS of numerous pre-mRNA involved in actin cytoskeleton and focal adhesion machineries, suggesting a role in promoting a cell differentiated state. Binds to introns, exons and 3'-UTR associated with tandem CAC trinucleotide motifs separated by a variable spacer region, at a minimum as a dimer. The minimal length of RNA required for RBPMS-binding tandem CAC motifs is 15 nt, with spacing ranging from 1 to 9 nt. Can also bind to CA dinucleotide repeats. Mediates repression of TPM1 exon 3 by binding to CAC tandem repeats in the flanking intronic regions, followed by higher-order oligomerization and heterotypic interactions with other splicing regulators including MBNL1 and RBFOX2, which prevents assembly of ATP-dependent splicing complexes. The sequence is that of RNA-binding protein with multiple splicing from Mus musculus (Mouse).